The chain runs to 279 residues: NAD-dependent protein deacylase (279 aa).

Positions 20–272 (RERLRQRIFF…PEFVEKLLKG (253 aa)) constitute a Deacetylase sirtuin-type domain. NAD(+) is bound at residue 48-67 (GAGISAESGIRTFRAADGLW). Substrate is bound by residues tyrosine 92 and arginine 95. 129-132 (QNID) is a binding site for NAD(+). Residue histidine 147 is the Proton acceptor of the active site. Zn(2+) is bound by residues cysteine 155 and cysteine 174. Residues 214 to 216 (GTS), 240 to 242 (NLE), and alanine 258 contribute to the NAD(+) site.

This sequence belongs to the sirtuin family. Class III subfamily. Forms a 1:1 complex with acetyl-CoA synthetase (Acs). The cofactor is Zn(2+).

The protein resides in the cytoplasm. The enzyme catalyses N(6)-acetyl-L-lysyl-[protein] + NAD(+) + H2O = 2''-O-acetyl-ADP-D-ribose + nicotinamide + L-lysyl-[protein]. It catalyses the reaction N(6)-succinyl-L-lysyl-[protein] + NAD(+) + H2O = 2''-O-succinyl-ADP-D-ribose + nicotinamide + L-lysyl-[protein]. The catalysed reaction is N(6)-(2-hydroxyisobutanoyl)-L-lysyl-[protein] + NAD(+) + H2O = 2''-O-(2-hydroxyisobutanoyl)-ADP-D-ribose + nicotinamide + L-lysyl-[protein]. Its activity is regulated as follows. Deacetylation is inhibited by nicotinamide. Functionally, NAD-dependent lysine deacetylase that specifically removes acetyl groups on target proteins. Also acts as a protein-lysine deacylase by mediating protein desuccinylation and de-2-hydroxyisobutyrylation. Modulates the activities of several proteins which are inactive in their acylated form. Activates the enzyme acetyl-CoA synthetase (acs) by deacetylating 'Lys-609' in the inactive, acetylated form of the enzyme. May also modulate the activity of other propionyl-adenosine monophosphate (AMP)-forming enzymes. In Escherichia coli (strain K12), this protein is NAD-dependent protein deacylase.